Consider the following 152-residue polypeptide: Psoriasis susceptibility 1 candidate gene 1 protein homolog (152 aa).

The segment covering 1 to 31 (MTCTDQKSHSQRALGTQTPALQGPQLLNTDP) has biased composition (polar residues). Disordered stretches follow at residues 1–39 (MTCTDQKSHSQRALGTQTPALQGPQLLNTDPSSEETRPP) and 132–152 (APTLLYSPPPSHSPFGLSSLI).

The chain is Psoriasis susceptibility 1 candidate gene 1 protein homolog (PSORS1C1) from Pan troglodytes (Chimpanzee).